Reading from the N-terminus, the 307-residue chain is 4-hydroxy-3-methylbut-2-enyl diphosphate reductase (307 aa).

Cys-13 serves as a coordination point for [4Fe-4S] cluster. (2E)-4-hydroxy-3-methylbut-2-enyl diphosphate-binding residues include His-42 and His-75. His-42 and His-75 together coordinate dimethylallyl diphosphate. Residues His-42 and His-75 each coordinate isopentenyl diphosphate. Cys-97 provides a ligand contact to [4Fe-4S] cluster. His-125 serves as a coordination point for (2E)-4-hydroxy-3-methylbut-2-enyl diphosphate. His-125 provides a ligand contact to dimethylallyl diphosphate. Isopentenyl diphosphate is bound at residue His-125. The Proton donor role is filled by Glu-127. Thr-165 lines the (2E)-4-hydroxy-3-methylbut-2-enyl diphosphate pocket. A [4Fe-4S] cluster-binding site is contributed by Cys-195. Residues Ser-223, Ser-224, Asn-225, and Ser-267 each contribute to the (2E)-4-hydroxy-3-methylbut-2-enyl diphosphate site. Residues Ser-223, Ser-224, Asn-225, and Ser-267 each contribute to the dimethylallyl diphosphate site. Isopentenyl diphosphate contacts are provided by Ser-223, Ser-224, Asn-225, and Ser-267.

The protein belongs to the IspH family. The cofactor is [4Fe-4S] cluster.

The catalysed reaction is isopentenyl diphosphate + 2 oxidized [2Fe-2S]-[ferredoxin] + H2O = (2E)-4-hydroxy-3-methylbut-2-enyl diphosphate + 2 reduced [2Fe-2S]-[ferredoxin] + 2 H(+). It catalyses the reaction dimethylallyl diphosphate + 2 oxidized [2Fe-2S]-[ferredoxin] + H2O = (2E)-4-hydroxy-3-methylbut-2-enyl diphosphate + 2 reduced [2Fe-2S]-[ferredoxin] + 2 H(+). The protein operates within isoprenoid biosynthesis; dimethylallyl diphosphate biosynthesis; dimethylallyl diphosphate from (2E)-4-hydroxy-3-methylbutenyl diphosphate: step 1/1. Its pathway is isoprenoid biosynthesis; isopentenyl diphosphate biosynthesis via DXP pathway; isopentenyl diphosphate from 1-deoxy-D-xylulose 5-phosphate: step 6/6. In terms of biological role, catalyzes the conversion of 1-hydroxy-2-methyl-2-(E)-butenyl 4-diphosphate (HMBPP) into a mixture of isopentenyl diphosphate (IPP) and dimethylallyl diphosphate (DMAPP). Acts in the terminal step of the DOXP/MEP pathway for isoprenoid precursor biosynthesis. The chain is 4-hydroxy-3-methylbut-2-enyl diphosphate reductase from Chlamydia trachomatis serovar L2b (strain UCH-1/proctitis).